The primary structure comprises 339 residues: Basic membrane protein A (339 aa).

The first 17 residues, 1–17, serve as a signal peptide directing secretion; that stretch reads MNKILLLILLESIVFLS. Residue Cys-18 is the site of N-palmitoyl cysteine attachment. The S-diacylglycerol cysteine moiety is linked to residue Cys-18.

It belongs to the BMP lipoprotein family. In terms of assembly, monomer.

The protein resides in the cell inner membrane. Immunogenic protein. May be part of an ABC-type nucleoside uptake system involved in the purine salvage pathway. In Borreliella burgdorferi (strain ATCC 35210 / DSM 4680 / CIP 102532 / B31) (Borrelia burgdorferi), this protein is Basic membrane protein A (bmpA).